Reading from the N-terminus, the 523-residue chain is Metalloprotease TIKI2 (523 aa).

A signal peptide spans 1–26; that stretch reads MGKTMWARAVFLCFSVGTLLWQEVLT. Topologically, residues 27-499 are extracellular; it reads RRIPVDTGQC…HSQSNSSPKC (473 aa). N225, N234, N283, and N341 each carry an N-linked (GlcNAc...) asparagine glycan. The helical transmembrane segment at 500–516 threads the bilayer; sequence LSASPAFLYTLVTLCLI. The Cytoplasmic segment spans residues 517-523; that stretch reads TTMRTRS.

The protein belongs to the TIKI family. The cofactor is Mn(2+). Co(2+) serves as cofactor.

The protein resides in the cell membrane. Functionally, metalloprotease that acts as a negative regulator of the Wnt signaling pathway by mediating the cleavage of the N-terminal residues of a subset of Wnt proteins. Following cleavage, Wnt proteins become oxidized and form large disulfide-bond oligomers, leading to their inactivation. Able to cleave wnt8. Required for head formation. This is Metalloprotease TIKI2 (trabd2b) from Xenopus tropicalis (Western clawed frog).